The primary structure comprises 887 residues: Alanine--tRNA ligase (887 aa).

His579, His583, Cys681, and His685 together coordinate Zn(2+).

Belongs to the class-II aminoacyl-tRNA synthetase family. Zn(2+) serves as cofactor.

The protein localises to the cytoplasm. It carries out the reaction tRNA(Ala) + L-alanine + ATP = L-alanyl-tRNA(Ala) + AMP + diphosphate. Catalyzes the attachment of alanine to tRNA(Ala) in a two-step reaction: alanine is first activated by ATP to form Ala-AMP and then transferred to the acceptor end of tRNA(Ala). Also edits incorrectly charged Ser-tRNA(Ala) and Gly-tRNA(Ala) via its editing domain. This is Alanine--tRNA ligase from Flavobacterium psychrophilum (strain ATCC 49511 / DSM 21280 / CIP 103535 / JIP02/86).